A 182-amino-acid chain; its full sequence is MLVLVLGDLHIPHRCNSLPAKFKKLLVPGKIQHILCTGNLCTKESYDYLKTLAGDVHIVRGDFDENLNYPEQKVVTVGQFKIGLIHGHQVIPWGDMASLALLQRQFDVDILISGHTHKFEAFEHENKFYINPGSATGAYNALETNIIPSFVLMDIQASTVVTYVYQLIGDDVKVERIEYKKS.

Lys-50 carries the post-translational modification N6-acetyllysine.

The protein belongs to the VPS29 family. Component of the commander complex consisting of the CCC subcomplex and the retriever subcomplex. Component of the heterotrimeric retriever complex formed by VPS26C, VPS29 and VPS35L; within the complex interacts with VPS35L. Component of the heterotrimeric retromer cargo-selective complex (CSC), also described as vacuolar protein sorting subcomplex (VPS) formed by VPS26 (VPS26A or VPS26B), VPS29 and VPS35. The CSC has a highly elongated structure with VPS26 and VPS29 binding independently at opposite distal ends of VPS35 as central platform. The CSC is believed to associate with variable sorting nexins to form functionally distinct retromer complex variants. The originally described retromer complex (also called SNX-BAR retromer) is a pentamer containing the CSC and a heterodimeric membrane-deforming subcomplex formed between SNX1 or SNX2 and SNX5 or SNX6 (also called SNX-BAR subcomplex); the respective CSC and SNX-BAR subcomplexes associate with low affinity. The CSC associates with SNX3 to form a SNX3-retromer complex. The CSC associates with SNX27, the WASH complex and the SNX-BAR subcomplex to form the SNX27-retromer complex. Interacts with VPS26A, VPS35, SNX1, SNX2, SNX3, SNX27, WASHC5. Interacts with TBC1D5; this interaction is blocked by VPS35L in the retriever complex. Interacts with SNX17; the interaction is indirect; SNX17 (via its C-terminus) interacts with the retriever complex (via VPS26C and VPS35L). Interacts with VPS26B and ANKRD27.

The protein resides in the cytoplasm. Its subcellular location is the membrane. The protein localises to the endosome membrane. Component of the commander complex that is essential for endosomal recycling of transmembrane cargos; the commander complex is composed of the CCC subcomplex and the retriever subcomplex. Component of the retriever complex, which is a heterotrimeric complex related to retromer cargo-selective complex (CSC) and essential for retromer-independent retrieval and recycling of numerous cargos such as integrin alpha-5/beta-1 (ITGA5:ITGB1). Component of the retromer cargo-selective complex (CSC). The CSC is believed to be the core functional component of retromer or respective retromer complex variants acting to prevent missorting of selected transmembrane cargo proteins into the lysosomal degradation pathway. The recruitment of the CSC to the endosomal membrane involves RAB7A and SNX3. The SNX-BAR retromer mediates retrograde transport of cargo proteins from endosomes to the trans-Golgi network (TGN) and is involved in endosome-to-plasma membrane transport for cargo protein recycling. The SNX3-retromer mediates the retrograde endosome-to-TGN transport of WLS distinct from the SNX-BAR retromer pathway. The SNX27-retromer is believed to be involved in endosome-to-plasma membrane trafficking and recycling of a broad spectrum of cargo proteins. The CSC seems to act as recruitment hub for other proteins, such as the WASH complex and TBC1D5. Required to regulate transcytosis of the polymeric immunoglobulin receptor (pIgR-pIgA). In the endosomes, retriever complex drives the retrieval and recycling of NxxY-motif-containing cargo proteins by coupling to SNX17, a cargo essential for the homeostatic maintenance of numerous cell surface proteins associated with processes that include cell migration, cell adhesion, nutrient supply and cell signaling. The recruitment of the retriever complex to the endosomal membrane involves CCC and WASH complexes. Involved in GLUT1 endosome-to-plasma membrane trafficking; the function is dependent of association with ANKRD27. In Mus musculus (Mouse), this protein is Vacuolar protein sorting-associated protein 29 (Vps29).